Consider the following 261-residue polypeptide: Cytochrome c oxidase subunit 3 (261 aa).

6 consecutive transmembrane segments (helical) span residues 31–51 (LVLW…LLLI), 82–102 (PMIL…WAFF), 126–146 (PFLV…TITW), 159–179 (AIQA…LQAW), 197–217 (FFVA…FLLV), and 239–259 (AWYW…IYWW).

This sequence belongs to the cytochrome c oxidase subunit 3 family. As to quaternary structure, component of the cytochrome c oxidase (complex IV, CIV), a multisubunit enzyme composed of a catalytic core of 3 subunits and several supernumerary subunits. The complex exists as a monomer or a dimer and forms supercomplexes (SCs) in the inner mitochondrial membrane with ubiquinol-cytochrome c oxidoreductase (cytochrome b-c1 complex, complex III, CIII).

It localises to the mitochondrion inner membrane. The catalysed reaction is 4 Fe(II)-[cytochrome c] + O2 + 8 H(+)(in) = 4 Fe(III)-[cytochrome c] + 2 H2O + 4 H(+)(out). Functionally, component of the cytochrome c oxidase, the last enzyme in the mitochondrial electron transport chain which drives oxidative phosphorylation. The respiratory chain contains 3 multisubunit complexes succinate dehydrogenase (complex II, CII), ubiquinol-cytochrome c oxidoreductase (cytochrome b-c1 complex, complex III, CIII) and cytochrome c oxidase (complex IV, CIV), that cooperate to transfer electrons derived from NADH and succinate to molecular oxygen, creating an electrochemical gradient over the inner membrane that drives transmembrane transport and the ATP synthase. Cytochrome c oxidase is the component of the respiratory chain that catalyzes the reduction of oxygen to water. Electrons originating from reduced cytochrome c in the intermembrane space (IMS) are transferred via the dinuclear copper A center (CU(A)) of subunit 2 and heme A of subunit 1 to the active site in subunit 1, a binuclear center (BNC) formed by heme A3 and copper B (CU(B)). The BNC reduces molecular oxygen to 2 water molecules using 4 electrons from cytochrome c in the IMS and 4 protons from the mitochondrial matrix. The chain is Cytochrome c oxidase subunit 3 (COIII) from Paracentrotus lividus (Common sea urchin).